A 458-amino-acid chain; its full sequence is Sulfite exporter TauE/SafE family protein 2 (458 aa).

12 consecutive transmembrane segments (helical) span residues 5–25, 53–73, 74–94, 101–121, 128–148, 150–170, 227–247, 267–287, 324–344, 348–368, 386–406, and 418–438; these read FVPI…EQEP, IELT…SSIS, SAGG…VAGL, SFSA…NLFV, GKTL…LLGV, IGVI…FAVF, FPWI…AVYL, YWLI…WICF, VMAL…GMLI, LLQV…MVLF, GTAS…LKVV, and IIVF…TSYG.

Belongs to the 4-toluene sulfonate uptake permease (TSUP) (TC 2.A.102) family.

It is found in the membrane. The polypeptide is Sulfite exporter TauE/SafE family protein 2 (Arabidopsis thaliana (Mouse-ear cress)).